The primary structure comprises 558 residues: Formate--tetrahydrofolate ligase (558 aa).

66 to 73 lines the ATP pocket; that stretch reads TPAGEGKT.

This sequence belongs to the formate--tetrahydrofolate ligase family.

It carries out the reaction (6S)-5,6,7,8-tetrahydrofolate + formate + ATP = (6R)-10-formyltetrahydrofolate + ADP + phosphate. The protein operates within one-carbon metabolism; tetrahydrofolate interconversion. The protein is Formate--tetrahydrofolate ligase of Neisseria meningitidis serogroup C (strain 053442).